Reading from the N-terminus, the 147-residue chain is Hemoglobin subunit epsilon (147 aa).

The 145-residue stretch at 3-147 folds into the Globin domain; the sequence is HFTAEEKSTI…VATALAHKYH (145 aa). Residues Ser-14 and Ser-51 each carry the phosphoserine modification. His-64 and His-93 together coordinate heme b.

This sequence belongs to the globin family. As to quaternary structure, heterotetramer of two alpha chains and two epsilon chains in early embryonic hemoglobin Gower-2; two zeta chains and two epsilon chains in early embryonic hemoglobin Gower-1. In terms of tissue distribution, red blood cells.

Its function is as follows. The epsilon chain is a beta-type chain of early mammalian embryonic hemoglobin. The polypeptide is Hemoglobin subunit epsilon (HBE1) (Eulemur fulvus fulvus (Brown lemur)).